Reading from the N-terminus, the 301-residue chain is Homoserine kinase (301 aa).

86–96 (PLARGLGSSAT) is a binding site for ATP.

The protein belongs to the GHMP kinase family. Homoserine kinase subfamily.

The protein resides in the cytoplasm. It catalyses the reaction L-homoserine + ATP = O-phospho-L-homoserine + ADP + H(+). Its pathway is amino-acid biosynthesis; L-threonine biosynthesis; L-threonine from L-aspartate: step 4/5. Its function is as follows. Catalyzes the ATP-dependent phosphorylation of L-homoserine to L-homoserine phosphate. The sequence is that of Homoserine kinase from Thermosynechococcus vestitus (strain NIES-2133 / IAM M-273 / BP-1).